Here is a 449-residue protein sequence, read N- to C-terminus: Chromosomal replication initiator protein DnaA (449 aa).

The tract at residues 1–73 (MTQNPQWLWQ…TETIAELLQQ (73 aa)) is domain I, interacts with DnaA modulators. The interval 73–109 (QPVKVRLTSPEGNTLAATQSFYSSRSGQSTRPGKKTP) is domain II. The span at 90 to 103 (TQSFYSSRSGQSTR) shows a compositional bias: polar residues. Residues 90–110 (TQSFYSSRSGQSTRPGKKTPE) are disordered. The tract at residues 110–326 (ELNSKYTFSR…GALLRAVTHI (217 aa)) is domain III, AAA+ region. 4 residues coordinate ATP: G154, G156, K157, and T158. Positions 327–449 (AISGLPMTVE…DRINHHHQNL (123 aa)) are domain IV, binds dsDNA.

The protein belongs to the DnaA family. In terms of assembly, oligomerizes as a right-handed, spiral filament on DNA at oriC.

The protein localises to the cytoplasm. In terms of biological role, plays an essential role in the initiation and regulation of chromosomal replication. ATP-DnaA binds to the origin of replication (oriC) to initiate formation of the DNA replication initiation complex once per cell cycle. Binds the DnaA box (a 9 base pair repeat at the origin) and separates the double-stranded (ds)DNA. Forms a right-handed helical filament on oriC DNA; dsDNA binds to the exterior of the filament while single-stranded (ss)DNA is stabiized in the filament's interior. The ATP-DnaA-oriC complex binds and stabilizes one strand of the AT-rich DNA unwinding element (DUE), permitting loading of DNA polymerase. After initiation quickly degrades to an ADP-DnaA complex that is not apt for DNA replication. Binds acidic phospholipids. The protein is Chromosomal replication initiator protein DnaA of Picosynechococcus sp. (strain ATCC 27264 / PCC 7002 / PR-6) (Agmenellum quadruplicatum).